Reading from the N-terminus, the 620-residue chain is LEAF RUST 10 DISEASE-RESISTANCE LOCUS RECEPTOR-LIKE PROTEIN KINASE-like 2.3 (620 aa).

The first 30 residues, 1-30, serve as a signal peptide directing secretion; it reads MDSLSSMGFQTASFFLILLFLFYHLPCVPS. At 31 to 256 the chain is on the extracellular side; sequence QQERSRLCKP…NNGTYSDNRP (226 aa). N-linked (GlcNAc...) asparagine glycosylation is found at Asn-75, Asn-85, Asn-93, Asn-132, Asn-148, Asn-162, Asn-189, Asn-231, and Asn-248. The helical transmembrane segment at 257–277 threads the bilayer; the sequence is FLVTIGTVLGSILCVCVVLFL. Over 278–620 the chain is Cytoplasmic; the sequence is AFYLNERRIA…SVESSIYSEV (343 aa). The region spanning 314–596 is the Protein kinase domain; it reads KSFTEVVGRG…SLDPPPKPLL (283 aa). Residues 320 to 328 and Lys-342 contribute to the ATP site; that span reads VGRGGFGTV. Asp-431 (proton acceptor) is an active-site residue. Residues 586-620 form a disordered region; sequence DSLDPPPKPLLHMPMQNNNAESSQLSVESSIYSEV. A compositionally biased stretch (polar residues) spans 600-620; that stretch reads MQNNNAESSQLSVESSIYSEV.

It belongs to the protein kinase superfamily. Ser/Thr protein kinase family.

The protein localises to the membrane. The catalysed reaction is L-seryl-[protein] + ATP = O-phospho-L-seryl-[protein] + ADP + H(+). It catalyses the reaction L-threonyl-[protein] + ATP = O-phospho-L-threonyl-[protein] + ADP + H(+). This chain is LEAF RUST 10 DISEASE-RESISTANCE LOCUS RECEPTOR-LIKE PROTEIN KINASE-like 2.3, found in Arabidopsis thaliana (Mouse-ear cress).